Here is a 496-residue protein sequence, read N- to C-terminus: Glycerol kinase (496 aa).

Threonine 12 serves as a coordination point for ADP. The ATP site is built by threonine 12, threonine 13, and serine 14. Threonine 12 serves as a coordination point for sn-glycerol 3-phosphate. Arginine 16 is a binding site for ADP. Sn-glycerol 3-phosphate is bound by residues arginine 82, glutamate 83, and tyrosine 134. Residues arginine 82, glutamate 83, and tyrosine 134 each coordinate glycerol. Histidine 230 bears the Phosphohistidine; by HPr mark. Residue aspartate 244 participates in sn-glycerol 3-phosphate binding. Positions 244 and 245 each coordinate glycerol. ADP is bound by residues threonine 266 and glycine 309. Threonine 266, glycine 309, glutamine 313, and glycine 410 together coordinate ATP. ADP is bound by residues glycine 410 and asparagine 414.

Belongs to the FGGY kinase family. Homotetramer and homodimer (in equilibrium). The phosphoenolpyruvate-dependent sugar phosphotransferase system (PTS), including enzyme I, and histidine-containing protein (HPr) are required for the phosphorylation, which leads to the activation of the enzyme.

It catalyses the reaction glycerol + ATP = sn-glycerol 3-phosphate + ADP + H(+). Its pathway is polyol metabolism; glycerol degradation via glycerol kinase pathway; sn-glycerol 3-phosphate from glycerol: step 1/1. With respect to regulation, activated by phosphorylation and inhibited by fructose 1,6-bisphosphate (FBP). Its function is as follows. Key enzyme in the regulation of glycerol uptake and metabolism. Catalyzes the phosphorylation of glycerol to yield sn-glycerol 3-phosphate. This chain is Glycerol kinase, found in Bacillus thuringiensis subsp. konkukian (strain 97-27).